A 216-amino-acid polypeptide reads, in one-letter code: Large ribosomal subunit protein uL3 (216 aa).

Residues 137–158 (GASHGAHKNHRKPGSIGGASTP) are disordered.

The protein belongs to the universal ribosomal protein uL3 family. As to quaternary structure, part of the 50S ribosomal subunit. Forms a cluster with proteins L14 and L19.

In terms of biological role, one of the primary rRNA binding proteins, it binds directly near the 3'-end of the 23S rRNA, where it nucleates assembly of the 50S subunit. The polypeptide is Large ribosomal subunit protein uL3 (Arthrobacter sp. (strain FB24)).